The chain runs to 383 residues: BRISC and BRCA1-A complex member 2 (383 aa).

An N-acetylmethionine modification is found at Met1. A Phosphoserine modification is found at Ser2. UEV-like regions lie at residues 30–147 and 275–364; these read DATN…TLLE and IAAF…RAKA.

This sequence belongs to the BABAM2 family. In terms of assembly, component of the ARISC complex, at least composed of UIMC1/RAP80, ABRAXAS1, BRCC3/BRCC36, BABAM2 and BABAM1/NBA1. Component of the BRCA1-A complex, at least composed of BRCA1, BARD1, UIMC1/RAP80, ABRAXAS1, BRCC3/BRCC36, BABAM2 and BABAM1/NBA1. In the BRCA1-A complex, interacts directly with ABRAXAS1, BRCC3/BRCC36 and BABAM1/NBA1. Binds polyubiquitin. Component of the BRISC complex, at least composed of ABRAXAS2, BRCC3/BRCC36, BABAM2 and BABAM1/NBA1. Identified in a complex with SHMT2 and the other subunits of the BRISC complex. Component of the BRCA1/BRCA2 containing complex (BRCC), which also contains BRCA1, BRCA2, BARD1, BRCC3/BRCC36 and RAD51. BRCC is a ubiquitin E3 ligase complex that enhances cellular survival following DNA damage. May interact with FAS and TNFRSF1A.

The protein resides in the cytoplasm. It is found in the nucleus. Component of the BRCA1-A complex, a complex that specifically recognizes 'Lys-63'-linked ubiquitinated histones H2A and H2AX at DNA lesions sites, leading to target the BRCA1-BARD1 heterodimer to sites of DNA damage at double-strand breaks (DSBs). The BRCA1-A complex also possesses deubiquitinase activity that specifically removes 'Lys-63'-linked ubiquitin on histones H2A and H2AX. In the BRCA1-A complex, it acts as an adapter that bridges the interaction between BABAM1/NBA1 and the rest of the complex, thereby being required for the complex integrity and modulating the E3 ubiquitin ligase activity of the BRCA1-BARD1 heterodimer. Component of the BRISC complex, a multiprotein complex that specifically cleaves 'Lys-63'-linked ubiquitin in various substrates. Within the BRISC complex, acts as an adapter that bridges the interaction between BABAM1/NBA1 and the rest of the complex, thereby being required for the complex integrity. The BRISC complex is required for normal mitotic spindle assembly and microtubule attachment to kinetochores via its role in deubiquitinating NUMA1. The BRISC complex plays a role in interferon signaling via its role in the deubiquitination of the interferon receptor IFNAR1; deubiquitination increases IFNAR1 activity by enhancing its stability and cell surface expression. Down-regulates the response to bacterial lipopolysaccharide (LPS) via its role in IFNAR1 deubiquitination. May play a role in homeostasis or cellular differentiation in cells of neural, epithelial and germline origins. May also act as a death receptor-associated anti-apoptotic protein, which inhibits the mitochondrial apoptotic pathway. May regulate TNF-alpha signaling through its interactions with TNFRSF1A; however these effects may be indirect. This Pongo abelii (Sumatran orangutan) protein is BRISC and BRCA1-A complex member 2 (BABAM2).